Here is a 240-residue protein sequence, read N- to C-terminus: Probable transcriptional regulatory protein Csal_0810 (240 aa).

It belongs to the TACO1 family.

The protein localises to the cytoplasm. In Chromohalobacter salexigens (strain ATCC BAA-138 / DSM 3043 / CIP 106854 / NCIMB 13768 / 1H11), this protein is Probable transcriptional regulatory protein Csal_0810.